Here is a 301-residue protein sequence, read N- to C-terminus: Small ribosomal subunit biogenesis GTPase RsgA (301 aa).

The region spanning 63–224 (INALVRPPIA…IADTPGFSSY (162 aa)) is the CP-type G domain. GTP is bound by residues 112–115 (SKAD) and 167–175 (GQTGAGKST). Positions 248, 253, 255, and 261 each coordinate Zn(2+).

This sequence belongs to the TRAFAC class YlqF/YawG GTPase family. RsgA subfamily. In terms of assembly, monomer. Associates with 30S ribosomal subunit, binds 16S rRNA. The cofactor is Zn(2+).

It is found in the cytoplasm. In terms of biological role, one of several proteins that assist in the late maturation steps of the functional core of the 30S ribosomal subunit. Helps release RbfA from mature subunits. May play a role in the assembly of ribosomal proteins into the subunit. Circularly permuted GTPase that catalyzes slow GTP hydrolysis, GTPase activity is stimulated by the 30S ribosomal subunit. In Leuconostoc citreum (strain KM20), this protein is Small ribosomal subunit biogenesis GTPase RsgA.